Here is a 416-residue protein sequence, read N- to C-terminus: Serine hydroxymethyltransferase (416 aa).

(6S)-5,6,7,8-tetrahydrofolate-binding positions include leucine 121 and 125–127; that span reads GHL. Residue lysine 229 is modified to N6-(pyridoxal phosphate)lysine. 354 to 356 serves as a coordination point for (6S)-5,6,7,8-tetrahydrofolate; that stretch reads SPF.

Belongs to the SHMT family. In terms of assembly, homodimer. It depends on pyridoxal 5'-phosphate as a cofactor.

It is found in the cytoplasm. The enzyme catalyses (6R)-5,10-methylene-5,6,7,8-tetrahydrofolate + glycine + H2O = (6S)-5,6,7,8-tetrahydrofolate + L-serine. It participates in one-carbon metabolism; tetrahydrofolate interconversion. It functions in the pathway amino-acid biosynthesis; glycine biosynthesis; glycine from L-serine: step 1/1. In terms of biological role, catalyzes the reversible interconversion of serine and glycine with tetrahydrofolate (THF) serving as the one-carbon carrier. This reaction serves as the major source of one-carbon groups required for the biosynthesis of purines, thymidylate, methionine, and other important biomolecules. Also exhibits THF-independent aldolase activity toward beta-hydroxyamino acids, producing glycine and aldehydes, via a retro-aldol mechanism. The sequence is that of Serine hydroxymethyltransferase from Halorhodospira halophila (strain DSM 244 / SL1) (Ectothiorhodospira halophila (strain DSM 244 / SL1)).